The chain runs to 411 residues: Short chain dehydrogenase ausT (411 aa).

NADP(+) contacts are provided by Asp105, Gln137, Tyr249, and Arg253. The active-site Proton donor is Tyr249. Tyr263 serves as the catalytic Proton donor.

This sequence belongs to the short-chain dehydrogenases/reductases (SDR) family.

It participates in secondary metabolite biosynthesis; terpenoid biosynthesis. Short chain dehydrogenase; part of the gene cluster that mediates the biosynthesis of calidodehydroaustin, a fungal meroterpenoid. The first step of the pathway is the synthesis of 3,5-dimethylorsellinic acid by the polyketide synthase ausA. 3,5-dimethylorsellinic acid is then prenylated by the polyprenyl transferase ausN. Further epoxidation by the FAD-dependent monooxygenase ausM and cyclization by the probable terpene cyclase ausL lead to the formation of protoaustinoid A. Protoaustinoid A is then oxidized to spiro-lactone preaustinoid A3 by the combined action of the FAD-binding monooxygenases ausB and ausC, and the dioxygenase ausE. Acid-catalyzed keto-rearrangement and ring contraction of the tetraketide portion of preaustinoid A3 by ausJ lead to the formation of preaustinoid A4. The aldo-keto reductase ausK, with the help of ausH, is involved in the next step by transforming preaustinoid A4 into isoaustinone which is in turn hydroxylated by the P450 monooxygenase ausI to form austinolide. The cytochrome P450 monooxygenase ausG modifies austinolide to austinol. Austinol is further acetylated to austin by the O-acetyltransferase ausP, which spontaneously changes to dehydroaustin. The cytochrome P450 monooxygenase ausR then converts dehydroaustin is into 7-dehydrodehydroaustin. The hydroxylation catalyzed by ausR permits the O-acetyltransferase ausQ to add an additional acetyl group to the molecule, leading to the formation of acetoxydehydroaustin. The short chain dehydrogenase ausT catalyzes the reduction of the double bond present between carbon atoms 1 and 2 to convert 7-dehydrodehydroaustin into 1,2-dihydro-7-hydroxydehydroaustin. AusQ catalyzes not only an acetylation reaction but also the addition of the PKS ausV diketide product to 1,2-dihydro-7-hydroxydehydroaustin, forming precalidodehydroaustin. Finally, the iron/alpha-ketoglutarate-dependent dioxygenase converts precalidodehydroaustin into calidodehydroaustin. In Aspergillus calidoustus, this protein is Short chain dehydrogenase ausT.